A 152-amino-acid chain; its full sequence is Transcriptional regulator MraZ (152 aa).

2 consecutive SpoVT-AbrB domains span residues 5 to 52 (ASAI…PIHE) and 81 to 124 (AHEV…DEQS).

The protein belongs to the MraZ family. Forms oligomers.

Its subcellular location is the cytoplasm. It localises to the nucleoid. This is Transcriptional regulator MraZ from Shewanella baltica (strain OS223).